The following is a 197-amino-acid chain: RNA pyrophosphohydrolase (197 aa).

The Nudix hydrolase domain occupies 6 to 149; that stretch reads GYRPNVGIVI…KRDVYRKAMK (144 aa). A Nudix box motif is present at residues 38–59; it reads GGINDGETPEQAMYRELYEEVG. A disordered region spans residues 165–197; that stretch reads LSTNNNDEKKANYSAKKPYSPYRNQDKKRKTRV.

Belongs to the Nudix hydrolase family. RppH subfamily. It depends on a divalent metal cation as a cofactor.

Functionally, accelerates the degradation of transcripts by removing pyrophosphate from the 5'-end of triphosphorylated RNA, leading to a more labile monophosphorylated state that can stimulate subsequent ribonuclease cleavage. The polypeptide is RNA pyrophosphohydrolase (Mannheimia succiniciproducens (strain KCTC 0769BP / MBEL55E)).